Reading from the N-terminus, the 637-residue chain is 3D-(3,5/4)-trihydroxycyclohexane-1,2-dione hydrolase (637 aa).

Glutamate 66 is a binding site for thiamine diphosphate. The thiamine pyrophosphate binding stretch occupies residues 442–522 (SLPGDLQRLW…INVLLFDNSG (81 aa)). Aspartate 493 and asparagine 520 together coordinate Mg(2+).

Belongs to the TPP enzyme family. Mg(2+) serves as cofactor. The cofactor is thiamine diphosphate.

It carries out the reaction 3D-3,5/4-trihydroxycyclohexane-1,2-dione + H2O = 5-deoxy-D-glucuronate + H(+). The protein operates within polyol metabolism; myo-inositol degradation into acetyl-CoA; acetyl-CoA from myo-inositol: step 3/7. Its function is as follows. Involved in the cleavage of the C1-C2 bond of 3D-(3,5/4)-trihydroxycyclohexane-1,2-dione (THcHDO) to yield 5-deoxy-glucuronate (5DG). The sequence is that of 3D-(3,5/4)-trihydroxycyclohexane-1,2-dione hydrolase from Bacillus licheniformis (strain ATCC 14580 / DSM 13 / JCM 2505 / CCUG 7422 / NBRC 12200 / NCIMB 9375 / NCTC 10341 / NRRL NRS-1264 / Gibson 46).